We begin with the raw amino-acid sequence, 398 residues long: Serine/threonine-protein phosphatase 4 regulatory subunit 2-B (398 aa).

The segment at 138–398 (SSEKNTSPSL…NAPEEPMEQD (261 aa)) is disordered. 3 stretches are compositionally biased toward polar residues: residues 139–149 (SEKNTSPSLNR), 156–170 (PSNS…NVNG), and 183–193 (TLSSPMNTNGL). Positions 197 to 211 (MENKESDLQQKEKSL) are enriched in basic and acidic residues. Over residues 278–294 (ASTSADKGKESCQTAQT) the composition is skewed to polar residues. The segment covering 338–366 (SESACSLNSEEPNSAAAAASTAGTDSSEG) has biased composition (low complexity).

It belongs to the PPP4R2 family. Serine/threonine-protein phosphatase 4 (PP4) occurs in different assemblies of the catalytic and one or more regulatory subunits.

Regulatory subunit of serine/threonine-protein phosphatase 4 (PP4). In Xenopus laevis (African clawed frog), this protein is Serine/threonine-protein phosphatase 4 regulatory subunit 2-B (ppp4r2-b).